We begin with the raw amino-acid sequence, 155 residues long: Cytochrome c-type biogenesis protein CcmE (155 aa).

Residues 1–8 (MNPRRKKR) are Cytoplasmic-facing. Residues 9-29 (LLITSLLAVALSLAVGLVLFA) form a helical; Signal-anchor for type II membrane protein membrane-spanning segment. Over 30-155 (LQQNIDLFYT…GMDNFKANNK (126 aa)) the chain is Periplasmic. Heme contacts are provided by H131 and Y135.

This sequence belongs to the CcmE/CycJ family.

It is found in the cell inner membrane. Its function is as follows. Heme chaperone required for the biogenesis of c-type cytochromes. Transiently binds heme delivered by CcmC and transfers the heme to apo-cytochromes in a process facilitated by CcmF and CcmH. This Psychromonas ingrahamii (strain DSM 17664 / CCUG 51855 / 37) protein is Cytochrome c-type biogenesis protein CcmE.